Here is a 320-residue protein sequence, read N- to C-terminus: Lipoyl synthase (320 aa).

[4Fe-4S] cluster contacts are provided by Cys67, Cys72, Cys78, Cys93, Cys97, Cys100, and Ser307. Positions 79–296 (FNHGTATFMI…GVIAKEIGFT (218 aa)) constitute a Radical SAM core domain.

Belongs to the radical SAM superfamily. Lipoyl synthase family. It depends on [4Fe-4S] cluster as a cofactor.

The protein localises to the cytoplasm. It catalyses the reaction [[Fe-S] cluster scaffold protein carrying a second [4Fe-4S](2+) cluster] + N(6)-octanoyl-L-lysyl-[protein] + 2 oxidized [2Fe-2S]-[ferredoxin] + 2 S-adenosyl-L-methionine + 4 H(+) = [[Fe-S] cluster scaffold protein] + N(6)-[(R)-dihydrolipoyl]-L-lysyl-[protein] + 4 Fe(3+) + 2 hydrogen sulfide + 2 5'-deoxyadenosine + 2 L-methionine + 2 reduced [2Fe-2S]-[ferredoxin]. It participates in protein modification; protein lipoylation via endogenous pathway; protein N(6)-(lipoyl)lysine from octanoyl-[acyl-carrier-protein]: step 2/2. In terms of biological role, catalyzes the radical-mediated insertion of two sulfur atoms into the C-6 and C-8 positions of the octanoyl moiety bound to the lipoyl domains of lipoate-dependent enzymes, thereby converting the octanoylated domains into lipoylated derivatives. In Pseudoalteromonas atlantica (strain T6c / ATCC BAA-1087), this protein is Lipoyl synthase.